We begin with the raw amino-acid sequence, 259 residues long: Sesquipedalian-2 (259 aa).

The 105-residue stretch at 17–121 (PADHMGFLRT…WVKVLSRASF (105 aa)) folds into the PH domain. A coiled-coil region spans residues 124-149 (MRLVVRELESQLQDARQSLALQRRSS). The F&amp;H motif lies at 223-235 (CFSTLHDWYGQEI).

This sequence belongs to the sesquipedalian family. In terms of assembly, forms homodimers and heterodimers with PHETA1. Interacts with OCRL and INPP5B.

It localises to the early endosome. It is found in the recycling endosome. The protein localises to the golgi apparatus. Its subcellular location is the trans-Golgi network. The protein resides in the cytoplasmic vesicle. It localises to the clathrin-coated vesicle. Functionally, plays a role in endocytic trafficking. Required for receptor recycling from endosomes, both to the trans-Golgi network and the plasma membrane. This is Sesquipedalian-2 from Homo sapiens (Human).